Consider the following 403-residue polypeptide: Argininosuccinate synthase (403 aa).

9-17 provides a ligand contact to ATP; the sequence is AYSGGLDTS. Residue tyrosine 86 participates in L-citrulline binding. Glycine 116 contacts ATP. The L-aspartate site is built by threonine 118, asparagine 122, and aspartate 123. Asparagine 122 lines the L-citrulline pocket. Residues arginine 126, serine 174, glutamate 259, and tyrosine 271 each contribute to the L-citrulline site.

Belongs to the argininosuccinate synthase family. Type 1 subfamily. In terms of assembly, homotetramer.

Its subcellular location is the cytoplasm. The catalysed reaction is L-citrulline + L-aspartate + ATP = 2-(N(omega)-L-arginino)succinate + AMP + diphosphate + H(+). It participates in amino-acid biosynthesis; L-arginine biosynthesis; L-arginine from L-ornithine and carbamoyl phosphate: step 2/3. This Ligilactobacillus salivarius (strain UCC118) (Lactobacillus salivarius) protein is Argininosuccinate synthase.